We begin with the raw amino-acid sequence, 181 residues long: Large ribosomal subunit protein bL17 (181 aa).

Residues alanine 129 to alanine 181 form a disordered region. A compositionally biased stretch (basic residues) spans proline 145–lysine 171.

It belongs to the bacterial ribosomal protein bL17 family. In terms of assembly, part of the 50S ribosomal subunit. Contacts protein L32.

In Bdellovibrio bacteriovorus (strain ATCC 15356 / DSM 50701 / NCIMB 9529 / HD100), this protein is Large ribosomal subunit protein bL17.